The primary structure comprises 940 residues: Phosphoenolpyruvate carboxylase (940 aa).

Active-site residues include H138 and K603.

Belongs to the PEPCase type 1 family. Requires Mg(2+) as cofactor.

It carries out the reaction oxaloacetate + phosphate = phosphoenolpyruvate + hydrogencarbonate. Its function is as follows. Forms oxaloacetate, a four-carbon dicarboxylic acid source for the tricarboxylic acid cycle. This is Phosphoenolpyruvate carboxylase from Streptococcus thermophilus (strain CNRZ 1066).